A 339-amino-acid polypeptide reads, in one-letter code: Glycerol-3-phosphate dehydrogenase [NAD(P)+] (339 aa).

Positions 11, 12, and 109 each coordinate NADPH. Positions 109, 140, and 142 each coordinate sn-glycerol 3-phosphate. Ala-144 is an NADPH binding site. Positions 195, 249, 259, 260, and 261 each coordinate sn-glycerol 3-phosphate. The active-site Proton acceptor is Lys-195. Position 260 (Arg-260) interacts with NADPH. Positions 284 and 286 each coordinate NADPH.

It belongs to the NAD-dependent glycerol-3-phosphate dehydrogenase family.

It is found in the cytoplasm. It catalyses the reaction sn-glycerol 3-phosphate + NAD(+) = dihydroxyacetone phosphate + NADH + H(+). It carries out the reaction sn-glycerol 3-phosphate + NADP(+) = dihydroxyacetone phosphate + NADPH + H(+). It functions in the pathway membrane lipid metabolism; glycerophospholipid metabolism. Catalyzes the reduction of the glycolytic intermediate dihydroxyacetone phosphate (DHAP) to sn-glycerol 3-phosphate (G3P), the key precursor for phospholipid synthesis. In Lactobacillus johnsonii (strain CNCM I-12250 / La1 / NCC 533), this protein is Glycerol-3-phosphate dehydrogenase [NAD(P)+].